The primary structure comprises 246 residues: MRSGVIARKVGMTRVFTDAGEHVPVTVLQIDQCQVVAHRTTEKDGYVALQVGVGKAKVKNVSQAERGRFAVAKVEPKKKLAEFRVSEDALIPVGAEITADHFIPGQFVDVTGTSTGKGFAGGMKRWNFGGLRATHGVSISHRSIGSTGGRQDPGKTFKNKKMPGHLGVERVTTQNLKVVRTDPERGLILVEGAVPGVAGGWIQVRDSVKRKLPADVPLPGKFRENGSAGASQVEAAPEAPASEENA.

2 disordered regions span residues 140 to 162 (SHRS…NKKM) and 215 to 246 (DVPL…EENA). Residue glutamine 151 is modified to N5-methylglutamine. The span at 234-246 (EAAPEAPASEENA) shows a compositional bias: low complexity.

It belongs to the universal ribosomal protein uL3 family. Part of the 50S ribosomal subunit. Forms a cluster with proteins L14 and L19. Methylated by PrmB.

Functionally, one of the primary rRNA binding proteins, it binds directly near the 3'-end of the 23S rRNA, where it nucleates assembly of the 50S subunit. The protein is Large ribosomal subunit protein uL3 of Methylorubrum extorquens (strain PA1) (Methylobacterium extorquens).